The sequence spans 155 residues: S-ribosylhomocysteine lyase (155 aa).

3 residues coordinate Fe cation: His58, His62, and Cys125.

Belongs to the LuxS family. Homodimer. Requires Fe cation as cofactor.

The enzyme catalyses S-(5-deoxy-D-ribos-5-yl)-L-homocysteine = (S)-4,5-dihydroxypentane-2,3-dione + L-homocysteine. Involved in the synthesis of autoinducer 2 (AI-2) which is secreted by bacteria and is used to communicate both the cell density and the metabolic potential of the environment. The regulation of gene expression in response to changes in cell density is called quorum sensing. Catalyzes the transformation of S-ribosylhomocysteine (RHC) to homocysteine (HC) and 4,5-dihydroxy-2,3-pentadione (DPD). This Chromohalobacter salexigens (strain ATCC BAA-138 / DSM 3043 / CIP 106854 / NCIMB 13768 / 1H11) protein is S-ribosylhomocysteine lyase.